The primary structure comprises 576 residues: V-type ATP synthase alpha chain (576 aa).

238–245 contributes to the ATP binding site; it reads GPFGAGKT.

It belongs to the ATPase alpha/beta chains family.

It catalyses the reaction ATP + H2O + 4 H(+)(in) = ADP + phosphate + 5 H(+)(out). Functionally, produces ATP from ADP in the presence of a proton gradient across the membrane. The V-type alpha chain is a catalytic subunit. The polypeptide is V-type ATP synthase alpha chain (Borrelia turicatae (strain 91E135)).